The chain runs to 180 residues: Oligoribonuclease (180 aa).

Positions 7 to 170 constitute an Exonuclease domain; it reads LIWIDLEMTG…DDIRESIAEL (164 aa). Y128 is an active-site residue.

It belongs to the oligoribonuclease family.

Its subcellular location is the cytoplasm. 3'-to-5' exoribonuclease specific for small oligoribonucleotides. The chain is Oligoribonuclease from Pseudomonas entomophila (strain L48).